A 455-amino-acid chain; its full sequence is L-serine dehydratase 2 (455 aa).

This sequence belongs to the iron-sulfur dependent L-serine dehydratase family. [4Fe-4S] cluster is required as a cofactor. Post-translationally, activated by post-translational modification by a system involving at least three gene products. Activation is mimicked in vitro by iron and dithiothreitol. There is considerable evidence for a free-radical activation mechanism.

The catalysed reaction is L-serine = pyruvate + NH4(+). It functions in the pathway carbohydrate biosynthesis; gluconeogenesis. Also deaminates threonine, particularly when it is present in high concentration. This Escherichia coli (strain K12) protein is L-serine dehydratase 2 (sdaB).